The following is a 155-amino-acid chain: MKLQLVAVGTKMPDWVQTGFTEYLRRFPKDMPFELIEIPAGKRGKNADIKRILDKEGEQMLAAAGKNRIVTLDIPGKPWDTPQLATELERWKLDGRDVSLLIGGPEGLSPACKAAAEQSWSLSALTLPHPLVRVLVAESLYRAWSITTNHPYHRE.

S-adenosyl-L-methionine contacts are provided by residues L72, G103, and 122 to 127 (LSALTL).

This sequence belongs to the RNA methyltransferase RlmH family. As to quaternary structure, homodimer.

The protein resides in the cytoplasm. It carries out the reaction pseudouridine(1915) in 23S rRNA + S-adenosyl-L-methionine = N(3)-methylpseudouridine(1915) in 23S rRNA + S-adenosyl-L-homocysteine + H(+). In terms of biological role, specifically methylates the pseudouridine at position 1915 (m3Psi1915) in 23S rRNA. The sequence is that of Ribosomal RNA large subunit methyltransferase H from Citrobacter koseri (strain ATCC BAA-895 / CDC 4225-83 / SGSC4696).